The chain runs to 596 residues: Genetic interactor of prohibitins 3, mitochondrial (596 aa).

Residues 1 to 21 constitute a mitochondrion transit peptide; sequence MLNLCHALRGVRQFSCSVIVK. The region spanning 113-305 is the CP-type G domain; the sequence is ESTLNDILNY…LFDLPGYSTS (193 aa).

The protein belongs to the TRAFAC class YlqF/YawG GTPase family. GEP3 subfamily.

It is found in the mitochondrion. Functionally, interacts genetically with prohibitins and thus may be involved in the mitochondrial lipid metabolism. This chain is Genetic interactor of prohibitins 3, mitochondrial (GEP3), found in Saccharomyces cerevisiae (strain AWRI796) (Baker's yeast).